The chain runs to 123 residues: Dormancy-associated protein homolog 4 (123 aa).

The segment at 7–86 (LWDETVAGPT…NPGTPLTPGT (80 aa)) is disordered. Over residues 30–46 (LSTVRSSPPSLSSDQVT) the composition is skewed to low complexity. Polar residues-rich tracts occupy residues 47 to 58 (RSIMVTKGNNNV) and 71 to 80 (PTCSSSNPGT). The residue at position 74 (serine 74) is a Phosphoserine.

It belongs to the DRM1/ARP family.

This Arabidopsis thaliana (Mouse-ear cress) protein is Dormancy-associated protein homolog 4.